The primary structure comprises 552 residues: uncharacterized protein (552 aa).

4 helical membrane-spanning segments follow: residues 127-147 (AIMLSFILILFQPFFIIISLL), 160-180 (LIIVTCIILSTLIALLSYINI), 393-413 (LTKQISLFLSISLFLCCLSAV), and 517-537 (VIDSWFDEVYAFACVFTFICI).

The protein localises to the membrane. This is an uncharacterized protein from Saccharomyces cerevisiae (strain ATCC 204508 / S288c) (Baker's yeast).